Consider the following 419-residue polypeptide: Protein indeterminate-domain 14 (419 aa).

Residues 1–58 (MIDYERSNTTKNINTHHHNPPPSSSSSDLLPDGNGTAVTQKRKRRPAGTPDPEAEVVS) are disordered. 3 C2H2-type zinc fingers span residues 70–92 (YVCE…RRRH), 112–142 (YVCP…RRKH), and 148–175 (WICE…TRGH). Residues Cys-150, Cys-153, His-166, Cys-170, Cys-177, Cys-179, His-192, and Cys-196 each contribute to the Zn(2+) site. Residues 175 to 198 (HSCDCGRVFSRVESFIEHQDTCTV) form a CCHC-type 2; atypical zinc finger. Positions 185 to 197 (RVESFIEHQDTCT) are SHR-binding. 2 disordered regions span residues 200–259 (RSQP…PSTL) and 298–318 (SEVE…EEAR). Low complexity-rich tracts occupy residues 213–230 (QHTT…NNEN) and 246–259 (RRQS…PSTL). A coiled-coil region spans residues 313 to 349 (EREEARRETKRQIEIAELEFAEAKRIRQHARAELHKA).

As to quaternary structure, homo- and heterodimer of IDD14alpha and IDD14beta. As to expression, expressed in cotyledons and the vasculature of reosette leaves. Weak expression in hypocotyls and floral organs, but not detected in roots and inflorescence stems.

The protein localises to the nucleus. Its function is as follows. Transcription factor regulating starch metabolism by binding directly to the promoter of QQS. The IDD14beta isoform attenuates the transcription factor activity by competitively forming heterodimers with reduced DNA-binding capacity. Regulates lateral organ morphogenesis and gravitropic responses. Has a redundant role with IDD16 in directing leaf and floral organ morphogenesis. Involved in the establishment of auxin gradients through the regulation of auxin biosynthesis and transport. The protein is Protein indeterminate-domain 14 of Arabidopsis thaliana (Mouse-ear cress).